The chain runs to 396 residues: MIISAASDYRAAAQRTLPPFLFHYIDGGAYAEYTLRRNVEDLSQVALRQRVLKNMSDLSLETTLFNETLSMPVALAPVGLCGMYARRGEVQAAAAADAKGIPFTLSTVSVCPIEEVAPTIKRPMWFQLYVLRDRGFMRNALERAKAAGCSTLVFTVDMPTPGARYRDAHSGMSGPNAAMRRYWQAVMHPKWAWDVGLNGRPHDLGNISAYLGKPTGLEDYIGWLANNFDPSISWKDLEWIREFWDGPMVIKGILDPEDARDAVRFGADGIVVSNHGGRQLDGVLSSARALPAIADAVKGDIAILADSGIRNGLDVVRMIALGADTVLLGRAYLYALATAGKAGVANLLDLIEKEMKVAMTLTGAKSISEISGDSLVQELGKSLPAALAPMSKGDAA.

An FMN hydroxy acid dehydrogenase domain is found at 1-380 (MIISAASDYR…SGDSLVQELG (380 aa)). Tyr24 contributes to the substrate binding site. FMN-binding residues include Ser106 and Gln127. Tyr129 is a substrate binding site. Thr155 serves as a coordination point for FMN. Position 164 (Arg164) interacts with substrate. FMN is bound at residue Lys251. Catalysis depends on His275, which acts as the Proton acceptor. Arg278 contacts substrate. 306 to 330 (DSGIRNGLDVVRMIALGADTVLLGR) provides a ligand contact to FMN.

It belongs to the FMN-dependent alpha-hydroxy acid dehydrogenase family. Requires FMN as cofactor.

It is found in the cell inner membrane. It catalyses the reaction (S)-lactate + A = pyruvate + AH2. Functionally, catalyzes the conversion of L-lactate to pyruvate. Is coupled to the respiratory chain. In Salmonella typhimurium (strain LT2 / SGSC1412 / ATCC 700720), this protein is L-lactate dehydrogenase.